We begin with the raw amino-acid sequence, 424 residues long: Glutamyl-tRNA reductase (424 aa).

Substrate-binding positions include 49–52 (TCNR), Ser-105, 110–112 (EPQ), and Gln-116. The Nucleophile role is filled by Cys-50. NADP(+) is bound at residue 185-190 (GSGETA).

The protein belongs to the glutamyl-tRNA reductase family. In terms of assembly, homodimer.

It carries out the reaction (S)-4-amino-5-oxopentanoate + tRNA(Glu) + NADP(+) = L-glutamyl-tRNA(Glu) + NADPH + H(+). The protein operates within porphyrin-containing compound metabolism; protoporphyrin-IX biosynthesis; 5-aminolevulinate from L-glutamyl-tRNA(Glu): step 1/2. Functionally, catalyzes the NADPH-dependent reduction of glutamyl-tRNA(Glu) to glutamate 1-semialdehyde (GSA). In Legionella pneumophila (strain Lens), this protein is Glutamyl-tRNA reductase.